Reading from the N-terminus, the 508-residue chain is Photosystem II CP47 reaction center protein (508 aa).

Helical transmembrane passes span 21–36 (SVHI…WAGS), 101–115 (IVFS…IWHW), 140–156 (GIHL…FGAF), 203–218 (IAAG…FHLS), 237–252 (VLSS…AFVV), and 457–472 (SFAL…HGAR).

It belongs to the PsbB/PsbC family. PsbB subfamily. In terms of assembly, PSII is composed of 1 copy each of membrane proteins PsbA, PsbB, PsbC, PsbD, PsbE, PsbF, PsbH, PsbI, PsbJ, PsbK, PsbL, PsbM, PsbT, PsbX, PsbY, PsbZ, Psb30/Ycf12, at least 3 peripheral proteins of the oxygen-evolving complex and a large number of cofactors. It forms dimeric complexes. Binds multiple chlorophylls. PSII binds additional chlorophylls, carotenoids and specific lipids. is required as a cofactor.

The protein resides in the plastid. It is found in the chloroplast thylakoid membrane. One of the components of the core complex of photosystem II (PSII). It binds chlorophyll and helps catalyze the primary light-induced photochemical processes of PSII. PSII is a light-driven water:plastoquinone oxidoreductase, using light energy to abstract electrons from H(2)O, generating O(2) and a proton gradient subsequently used for ATP formation. The protein is Photosystem II CP47 reaction center protein of Gossypium barbadense (Sea Island cotton).